The following is a 263-amino-acid chain: MQIVILKDSASVAEYGANIFIKQLQKKADSVLGLATGSTPLSLYQGLIAANKDKQISFKAVTTFNLDEYLGLEGTHPQSYRYFMNEQLFDHIDIDKSKTFVPPGDAENPIAACQGYEDKIKSAGGIDIQLLGIGRNGHIGFNEPSSGLMSRTRVKTLTKATIDDNARFFKEGEYQPHLSITMGIGTILDAKKVVLLATGENKAEAILATVEGALTAACPASALQLHQDAVLVIDEAAASKLTDRDFYKHIEVENQKLMARLGL.

Asp-67 (proton acceptor; for enolization step) is an active-site residue. The active-site For ring-opening step is Asn-136. His-138 serves as the catalytic Proton acceptor; for ring-opening step. Glu-143 functions as the For ring-opening step in the catalytic mechanism.

This sequence belongs to the glucosamine/galactosamine-6-phosphate isomerase family. NagB subfamily. In terms of assembly, homohexamer.

The enzyme catalyses alpha-D-glucosamine 6-phosphate + H2O = beta-D-fructose 6-phosphate + NH4(+). The protein operates within amino-sugar metabolism; N-acetylneuraminate degradation; D-fructose 6-phosphate from N-acetylneuraminate: step 5/5. Functionally, catalyzes the reversible isomerization-deamination of glucosamine 6-phosphate (GlcN6P) to form fructose 6-phosphate (Fru6P) and ammonium ion. The sequence is that of Glucosamine-6-phosphate deaminase from Shewanella halifaxensis (strain HAW-EB4).